The chain runs to 314 residues: DNA-directed RNA polymerase subunit alpha (314 aa).

The segment at 1–228 (MIEIEKPRIE…EHLNIFVGLT (228 aa)) is alpha N-terminal domain (alpha-NTD). The tract at residues 245 to 314 (KEKVLEMSIE…DLGLGLRKED (70 aa)) is alpha C-terminal domain (alpha-CTD).

The protein belongs to the RNA polymerase alpha chain family. As to quaternary structure, homodimer. The RNAP catalytic core consists of 2 alpha, 1 beta, 1 beta' and 1 omega subunit. When a sigma factor is associated with the core the holoenzyme is formed, which can initiate transcription.

The enzyme catalyses RNA(n) + a ribonucleoside 5'-triphosphate = RNA(n+1) + diphosphate. In terms of biological role, DNA-dependent RNA polymerase catalyzes the transcription of DNA into RNA using the four ribonucleoside triphosphates as substrates. In Staphylococcus saprophyticus subsp. saprophyticus (strain ATCC 15305 / DSM 20229 / NCIMB 8711 / NCTC 7292 / S-41), this protein is DNA-directed RNA polymerase subunit alpha.